The primary structure comprises 153 residues: Large ribosomal subunit protein uL15 (153 aa).

The disordered stretch occupies residues 21 to 41; that stretch reads RGIGSGKGKTGGRGIKGQKSR. Residues 23-35 show a composition bias toward gly residues; the sequence is IGSGKGKTGGRGI.

The protein belongs to the universal ribosomal protein uL15 family. In terms of assembly, part of the 50S ribosomal subunit.

Functionally, binds to the 23S rRNA. This Rickettsia africae (strain ESF-5) protein is Large ribosomal subunit protein uL15.